The following is a 194-amino-acid chain: GTP cyclohydrolase 1 (194 aa).

Zn(2+) contacts are provided by Cys-83, His-86, and Cys-155.

The protein belongs to the GTP cyclohydrolase I family. In terms of assembly, toroid-shaped homodecamer, composed of two pentamers of five dimers.

It carries out the reaction GTP + H2O = 7,8-dihydroneopterin 3'-triphosphate + formate + H(+). The protein operates within cofactor biosynthesis; 7,8-dihydroneopterin triphosphate biosynthesis; 7,8-dihydroneopterin triphosphate from GTP: step 1/1. In Streptococcus pyogenes serotype M1, this protein is GTP cyclohydrolase 1 (folE).